The chain runs to 280 residues: Hydroxyacylglutathione hydrolase, mitochondrial (280 aa).

Position 61 is an N6-acetyllysine (Lys-61). Positions 74, 76, 78, and 79 each coordinate Zn(2+). N6-acetyllysine is present on Lys-88. 2 residues coordinate Zn(2+): His-130 and Asp-154. Substrate contacts are provided by residues Lys-163 to Tyr-165 and His-193 to Tyr-195. His-193 is a binding site for Zn(2+). N6-acetyllysine; alternate is present on Lys-201. N6-succinyllysine; alternate is present on Lys-201. Arg-269–Lys-272 lines the substrate pocket.

The protein belongs to the metallo-beta-lactamase superfamily. Glyoxalase II family. Monomer. It depends on Zn(2+) as a cofactor. As to expression, testis.

It localises to the mitochondrion matrix. It is found in the cytoplasm. It carries out the reaction an S-(2-hydroxyacyl)glutathione + H2O = a 2-hydroxy carboxylate + glutathione + H(+). The catalysed reaction is (R)-S-lactoylglutathione + H2O = (R)-lactate + glutathione + H(+). It functions in the pathway secondary metabolite metabolism; methylglyoxal degradation; (R)-lactate from methylglyoxal: step 2/2. Functionally, thiolesterase that catalyzes the hydrolysis of S-D-lactoyl-glutathione to form glutathione and D-lactic acid. In Callithrix jacchus (White-tufted-ear marmoset), this protein is Hydroxyacylglutathione hydrolase, mitochondrial (HAGH).